A 271-amino-acid chain; its full sequence is Ribosomal RNA small subunit methyltransferase A (271 aa).

Positions 11, 13, 38, 58, 86, and 101 each coordinate S-adenosyl-L-methionine.

Belongs to the class I-like SAM-binding methyltransferase superfamily. rRNA adenine N(6)-methyltransferase family. RsmA subfamily.

Its subcellular location is the cytoplasm. It carries out the reaction adenosine(1518)/adenosine(1519) in 16S rRNA + 4 S-adenosyl-L-methionine = N(6)-dimethyladenosine(1518)/N(6)-dimethyladenosine(1519) in 16S rRNA + 4 S-adenosyl-L-homocysteine + 4 H(+). Its function is as follows. Specifically dimethylates two adjacent adenosines (A1518 and A1519) in the loop of a conserved hairpin near the 3'-end of 16S rRNA in the 30S particle. May play a critical role in biogenesis of 30S subunits. In Helicobacter pylori (strain ATCC 700392 / 26695) (Campylobacter pylori), this protein is Ribosomal RNA small subunit methyltransferase A.